Reading from the N-terminus, the 314-residue chain is GTPase Era (314 aa).

An Era-type G domain is found at 21 to 189 (KSGFVGIIGR…QKTLINLLEP (169 aa)). Residues 29–36 (GRPNVGKS) are G1. Residue 29-36 (GRPNVGKS) coordinates GTP. The tract at residues 55 to 59 (QTTRN) is G2. The G3 stretch occupies residues 76–79 (DTPG). Residues 76–80 (DTPGI) and 138–141 (NKSD) contribute to the GTP site. The G4 stretch occupies residues 138–141 (NKSD). Positions 168 to 170 (FSA) are G5. The 85-residue stretch at 212 to 296 (IREQILQQTR…YLQLFVKVEP (85 aa)) folds into the KH type-2 domain.

The protein belongs to the TRAFAC class TrmE-Era-EngA-EngB-Septin-like GTPase superfamily. Era GTPase family. As to quaternary structure, monomer.

The protein localises to the cytoplasm. The protein resides in the cell inner membrane. An essential GTPase that binds both GDP and GTP, with rapid nucleotide exchange. Plays a role in 16S rRNA processing and 30S ribosomal subunit biogenesis and possibly also in cell cycle regulation and energy metabolism. The chain is GTPase Era from Rippkaea orientalis (strain PCC 8801 / RF-1) (Cyanothece sp. (strain PCC 8801)).